Reading from the N-terminus, the 635-residue chain is Extracellular metalloproteinase 1 (635 aa).

The signal sequence occupies residues 1–19 (MHGLLLAAGLLSLPLHVLA). The propeptide occupies 20 to 246 (HPQPSTSTSL…VHNVVDYVAH (227 aa)). An N-linked (GlcNAc...) asparagine glycan is attached at Asn-287. Zn(2+) is bound at residue His-430. Glu-431 is an active-site residue. His-434 provides a ligand contact to Zn(2+). Residues Asn-475, Asn-594, and Asn-623 are each glycosylated (N-linked (GlcNAc...) asparagine).

The protein belongs to the peptidase M36 family. It depends on Zn(2+) as a cofactor.

The protein resides in the secreted. Secreted metalloproteinase probably acting as a virulence factor. In Trichophyton tonsurans (Scalp ringworm fungus), this protein is Extracellular metalloproteinase 1 (MEP1).